Reading from the N-terminus, the 301-residue chain is Nucleotide-binding protein ELI_02120 (301 aa).

Position 12-19 (12-19 (GMSGAGKS)) interacts with ATP. 62–65 (DSRT) contacts GTP.

The protein belongs to the RapZ-like family.

In terms of biological role, displays ATPase and GTPase activities. The sequence is that of Nucleotide-binding protein ELI_02120 from Erythrobacter litoralis (strain HTCC2594).